We begin with the raw amino-acid sequence, 443 residues long: D(2) dopamine receptor (443 aa).

The Extracellular portion of the chain corresponds to 1–37 (MDPLNLSWYDDDPESRNWSRPFNGSEGKVGKPHYNYY). N-linked (GlcNAc...) asparagine glycans are attached at residues N5, N17, and N23. A helical membrane pass occupies residues 38-60 (AMLLTLLIFVIVFGNVLVCMAVS). Over 61–70 (REKALQTTTN) the chain is Cytoplasmic. The helical transmembrane segment at 71–93 (YLIVSLAVADLLVATLVMPWVVY) threads the bilayer. Over 94 to 108 (LEVVGEWKFSRIHCD) the chain is Extracellular. C107 and C182 are joined by a disulfide. The helical transmembrane segment at 109–130 (IFVTLDVMMCTASILNLCAISI) threads the bilayer. The Cytoplasmic segment spans residues 131-151 (DRYTAVAMPMLYNTRYSSKRR). A helical transmembrane segment spans residues 152–172 (VTVMIAIVWVLSFTISCPLLF). Topologically, residues 173-188 (GLNNTDQNECIIANPA) are extracellular. A helical membrane pass occupies residues 189–213 (FVVYSSVVSFYVPFIVTLLVYIKIY). The segment at 211-373 (KIYIVLRRRR…SQQKEKKATQ (163 aa)) is interaction with PPP1R9B. Residues 214 to 373 (IVLRRRRKRV…SQQKEKKATQ (160 aa)) are Cytoplasmic-facing. The interval 282–331 (EMLSSTSPPERTRYSPIPPSHHQLTLPDPSHHGLHSTANSPVKPEKNGHA) is disordered. Residues 374 to 395 (MLAIVLGVFIICWLPFFITHIL) traverse the membrane as a helical segment. Residues 396 to 409 (NIHCDCNIPPVLYS) are Extracellular-facing. C399 and C401 are disulfide-bonded. The chain crosses the membrane as a helical span at residues 410–431 (AFTWLGYVNSAVNPIIYTTFNV). The Cytoplasmic segment spans residues 432-443 (EFRKAFMKILHC). C443 carries S-palmitoyl cysteine lipidation.

The protein belongs to the G-protein coupled receptor 1 family. Forms homo- and heterooligomers with DRD4. The interaction with DRD4 may modulate agonist-induced downstream signaling. Interacts with CADPS and CADPS2. Interacts with GPRASP1, PPP1R9B and CLIC6. Interacts with ARRB2. Interacts with HTR2A. Interacts with DRD1. Interacts with KCNA2. In terms of processing, palmitoylated. Palmitoylation which is required for proper localization to the plasma membrane and stability of the receptor could be carried on by ZDHHC4, ZDHHC3 and ZDHHC8.

It is found in the cell membrane. The protein localises to the golgi apparatus membrane. Dopamine receptor whose activity is mediated by G proteins which inhibit adenylyl cyclase. Positively regulates postnatal regression of retinal hyaloid vessels via suppression of VEGFR2/KDR activity, downstream of OPN5. The sequence is that of D(2) dopamine receptor (DRD2) from Mustela putorius furo (European domestic ferret).